A 152-amino-acid chain; its full sequence is Endoribonuclease YbeY (152 aa).

Zn(2+) is bound by residues H118, H122, and H128.

The protein belongs to the endoribonuclease YbeY family. Zn(2+) is required as a cofactor.

It localises to the cytoplasm. Functionally, single strand-specific metallo-endoribonuclease involved in late-stage 70S ribosome quality control and in maturation of the 3' terminus of the 16S rRNA. The chain is Endoribonuclease YbeY from Pelotomaculum thermopropionicum (strain DSM 13744 / JCM 10971 / SI).